A 277-amino-acid polypeptide reads, in one-letter code: Orotidine 5'-phosphate decarboxylase (277 aa).

Substrate-binding positions include aspartate 40, 62 to 64 (KTH), 93 to 102 (DRKFIDIGNT), tyrosine 229, and arginine 247. The active-site Proton donor is the lysine 95.

This sequence belongs to the OMP decarboxylase family.

The catalysed reaction is orotidine 5'-phosphate + H(+) = UMP + CO2. It participates in pyrimidine metabolism; UMP biosynthesis via de novo pathway; UMP from orotate: step 2/2. The sequence is that of Orotidine 5'-phosphate decarboxylase (pyrG) from Aspergillus awamori (Black koji mold).